A 335-amino-acid polypeptide reads, in one-letter code: Glycerol-3-phosphate dehydrogenase [NAD(P)+] (335 aa).

Serine 12, tryptophan 13, and lysine 107 together coordinate NADPH. Residues lysine 107, glycine 138, and serine 140 each contribute to the sn-glycerol 3-phosphate site. NADPH is bound at residue alanine 142. Sn-glycerol 3-phosphate contacts are provided by lysine 193, aspartate 246, serine 256, arginine 257, and asparagine 258. The active-site Proton acceptor is the lysine 193. Arginine 257 contacts NADPH. The NADPH site is built by valine 281 and glutamate 283.

Belongs to the NAD-dependent glycerol-3-phosphate dehydrogenase family.

Its subcellular location is the cytoplasm. The catalysed reaction is sn-glycerol 3-phosphate + NAD(+) = dihydroxyacetone phosphate + NADH + H(+). The enzyme catalyses sn-glycerol 3-phosphate + NADP(+) = dihydroxyacetone phosphate + NADPH + H(+). It participates in membrane lipid metabolism; glycerophospholipid metabolism. Catalyzes the reduction of the glycolytic intermediate dihydroxyacetone phosphate (DHAP) to sn-glycerol 3-phosphate (G3P), the key precursor for phospholipid synthesis. The sequence is that of Glycerol-3-phosphate dehydrogenase [NAD(P)+] from Geobacter metallireducens (strain ATCC 53774 / DSM 7210 / GS-15).